We begin with the raw amino-acid sequence, 83 residues long: Exodeoxyribonuclease 7 small subunit (83 aa).

It belongs to the XseB family. In terms of assembly, heterooligomer composed of large and small subunits.

It localises to the cytoplasm. It carries out the reaction Exonucleolytic cleavage in either 5'- to 3'- or 3'- to 5'-direction to yield nucleoside 5'-phosphates.. In terms of biological role, bidirectionally degrades single-stranded DNA into large acid-insoluble oligonucleotides, which are then degraded further into small acid-soluble oligonucleotides. The protein is Exodeoxyribonuclease 7 small subunit of Afipia carboxidovorans (strain ATCC 49405 / DSM 1227 / KCTC 32145 / OM5) (Oligotropha carboxidovorans).